A 180-amino-acid polypeptide reads, in one-letter code: MSGLTIFSDQEPQQPLWQSRDAQAIGQQLAQIGVRFERWQADRELGENPDPAVVIAAYQHQIDRLVAEKGYQSWDVISMRPDNAQREVLRSKFLSEHTHGEDEVRFFVEGAGLFCLHLDGKIFQILCEKNDLISVPANTRHWFDMGSAPNFTAIRVFDNPEGWVAHFTGDNIADAYPRLD.

Positions 97, 99, 103, and 141 each coordinate Fe(2+). Ni(2+) is bound by residues His97, His99, Glu103, and His141.

It belongs to the acireductone dioxygenase (ARD) family. Monomer. Requires Fe(2+) as cofactor. Ni(2+) is required as a cofactor.

It catalyses the reaction 1,2-dihydroxy-5-(methylsulfanyl)pent-1-en-3-one + O2 = 3-(methylsulfanyl)propanoate + CO + formate + 2 H(+). The catalysed reaction is 1,2-dihydroxy-5-(methylsulfanyl)pent-1-en-3-one + O2 = 4-methylsulfanyl-2-oxobutanoate + formate + 2 H(+). It participates in amino-acid biosynthesis; L-methionine biosynthesis via salvage pathway; L-methionine from S-methyl-5-thio-alpha-D-ribose 1-phosphate: step 5/6. Catalyzes 2 different reactions between oxygen and the acireductone 1,2-dihydroxy-3-keto-5-methylthiopentene (DHK-MTPene) depending upon the metal bound in the active site. Fe-containing acireductone dioxygenase (Fe-ARD) produces formate and 2-keto-4-methylthiobutyrate (KMTB), the alpha-ketoacid precursor of methionine in the methionine recycle pathway. Ni-containing acireductone dioxygenase (Ni-ARD) produces methylthiopropionate, carbon monoxide and formate, and does not lie on the methionine recycle pathway. This is Acireductone dioxygenase from Serratia proteamaculans (strain 568).